We begin with the raw amino-acid sequence, 477 residues long: Glycogen synthase (477 aa).

Residue Lys-15 participates in ADP-alpha-D-glucose binding.

It belongs to the glycosyltransferase 1 family. Bacterial/plant glycogen synthase subfamily.

It carries out the reaction [(1-&gt;4)-alpha-D-glucosyl](n) + ADP-alpha-D-glucose = [(1-&gt;4)-alpha-D-glucosyl](n+1) + ADP + H(+). It functions in the pathway glycan biosynthesis; glycogen biosynthesis. Synthesizes alpha-1,4-glucan chains using ADP-glucose. The polypeptide is Glycogen synthase (Anaeromyxobacter dehalogenans (strain 2CP-1 / ATCC BAA-258)).